We begin with the raw amino-acid sequence, 495 residues long: Taxoid 2-alpha-hydroxylase (495 aa).

A helical transmembrane segment spans residues 17–37 (LQSSAILLTVVSGIIVIVILL). Cys-441 is a heme binding site.

This sequence belongs to the cytochrome P450 family.

Its subcellular location is the microsome membrane. The enzyme catalyses taxusin + reduced [NADPH--hemoprotein reductase] + O2 = 2alpha-hydroxytaxusin + oxidized [NADPH--hemoprotein reductase] + H2O + H(+). It catalyses the reaction 7beta-hydroxytaxusin + reduced [NADPH--hemoprotein reductase] + O2 = 2alpha,7beta-dihydroxytaxusin + oxidized [NADPH--hemoprotein reductase] + H2O + H(+). Its pathway is alkaloid biosynthesis; taxol biosynthesis. Functionally, catalyzes the conversion of taxusin to 2-alpha-hydroxytaxusin in taxol biosynthesis. Catalyzes the conversion of 7-beta-hydroxytaxusin to 2-alpha-7-beta-hydroxytaxusin in taxol biosynthesis. This Taxus canadensis (Canadian yew) protein is Taxoid 2-alpha-hydroxylase.